The primary structure comprises 114 residues: Late cornified envelope protein 1D (114 aa).

The span at Met1–Cys10 shows a compositional bias: low complexity. Disordered regions lie at residues Met1–Thr21 and His75–Cys114. Basic residues predominate over residues His75–Pro86. Positions Ser88–Ser99 are enriched in low complexity.

The protein belongs to the LCE family. In terms of assembly, interacts with CYSRT1. Skin-specific. Expression was readily detected in adult trunk skin, adult arm skin, fetal skin, penal skin, vulva, esophagus and tongue. Not expressed in the cervix, rectum, lung, colon, or placenta.

Precursors of the cornified envelope of the stratum corneum. This chain is Late cornified envelope protein 1D (LCE1D), found in Homo sapiens (Human).